The following is a 543-amino-acid chain: CTP synthase (543 aa).

The amidoligase domain stretch occupies residues 1–265 (MARYIFITGG…DEEVLAAFGI (265 aa)). Residue Ser-13 participates in CTP binding. Ser-13 is a binding site for UTP. 14 to 19 (SLGKGL) is an ATP binding site. Position 54 (Tyr-54) interacts with L-glutamine. Asp-71 is a binding site for ATP. Positions 71 and 139 each coordinate Mg(2+). Residues 146–148 (DIE), 186–191 (KTKPTQ), and Lys-222 contribute to the CTP site. UTP-binding positions include 186–191 (KTKPTQ) and Lys-222. 238–240 (RDA) lines the ATP pocket. The Glutamine amidotransferase type-1 domain maps to 291-542 (TIAIVGKYTG…IEAAMAQSRL (252 aa)). L-glutamine is bound at residue Gly-353. The active-site Nucleophile; for glutamine hydrolysis is Cys-380. L-glutamine contacts are provided by residues 381 to 384 (FGMQ), Glu-404, and Arg-470. Active-site residues include His-515 and Glu-517.

The protein belongs to the CTP synthase family. In terms of assembly, homotetramer.

It catalyses the reaction UTP + L-glutamine + ATP + H2O = CTP + L-glutamate + ADP + phosphate + 2 H(+). The catalysed reaction is L-glutamine + H2O = L-glutamate + NH4(+). The enzyme catalyses UTP + NH4(+) + ATP = CTP + ADP + phosphate + 2 H(+). Its pathway is pyrimidine metabolism; CTP biosynthesis via de novo pathway; CTP from UDP: step 2/2. Allosterically activated by GTP, when glutamine is the substrate; GTP has no effect on the reaction when ammonia is the substrate. The allosteric effector GTP functions by stabilizing the protein conformation that binds the tetrahedral intermediate(s) formed during glutamine hydrolysis. Inhibited by the product CTP, via allosteric rather than competitive inhibition. Functionally, catalyzes the ATP-dependent amination of UTP to CTP with either L-glutamine or ammonia as the source of nitrogen. Regulates intracellular CTP levels through interactions with the four ribonucleotide triphosphates. The chain is CTP synthase from Rhodopseudomonas palustris (strain BisA53).